Reading from the N-terminus, the 209-residue chain is Large ribosomal subunit protein bL25 (209 aa).

Positions 190–209 (LKSEEAASEGAAEEEAKDGE) are disordered. The span at 200–209 (AAEEEAKDGE) shows a compositional bias: acidic residues.

Belongs to the bacterial ribosomal protein bL25 family. CTC subfamily. As to quaternary structure, part of the 50S ribosomal subunit; part of the 5S rRNA/L5/L18/L25 subcomplex. Contacts the 5S rRNA. Binds to the 5S rRNA independently of L5 and L18.

Its function is as follows. This is one of the proteins that binds to the 5S RNA in the ribosome where it forms part of the central protuberance. This is Large ribosomal subunit protein bL25 from Brucella anthropi (strain ATCC 49188 / DSM 6882 / CCUG 24695 / JCM 21032 / LMG 3331 / NBRC 15819 / NCTC 12168 / Alc 37) (Ochrobactrum anthropi).